The primary structure comprises 496 residues: Aminoacetaldehyde dehydrogenase (496 aa).

NADH-binding residues include Leu166, Trp168, Lys192, Ser246, Thr249, and Tyr256. Glu268 functions as the Proton acceptor in the catalytic mechanism. Position 269 (Cys269) interacts with NADH. Residue Cys303 is the Nucleophile of the active site. The NADH site is built by Lys353 and Glu398.

This sequence belongs to the aldehyde dehydrogenase family. Homotetramer, formed by two symmetrical dimers.

It carries out the reaction aminoacetaldehyde + NAD(+) + H2O = glycine + NADH + 2 H(+). It catalyses the reaction 3-aminopropanal + NAD(+) + H2O = beta-alanine + NADH + 2 H(+). NAD(+)-dependent aminoaldehyde dehydrogenase highly efficient with protonated aminoacetaldehyde (ACTAL) and 3-aminopropanaldehyde (APAL). Likely participates in a still uncharacterized metabolic pathway present in proteobacteria species, in which ACTAL might be an intermediate, yielding glycine. Highly prefers NAD(+) over NADP(+). Shows very poor activity with acetaldehyde, propanaldehyde, butanaldehyde, pentanaldehyde, dimethylaminoacetaldehyde, trimethylaminoacetaldehyde (betaine aldehyde), trimethylaminobutanaldehyde, short aliphatic hydroxyaldehydes such as 3-hydroxypropanaldehyde and 2-hydroxypropanaldehyde (lactaldehyde), and aromatic aldehydes. In Pseudomonas aeruginosa (strain ATCC 15692 / DSM 22644 / CIP 104116 / JCM 14847 / LMG 12228 / 1C / PRS 101 / PAO1), this protein is Aminoacetaldehyde dehydrogenase.